A 228-amino-acid polypeptide reads, in one-letter code: L-ribulose-5-phosphate 4-epimerase UlaF (228 aa).

Substrate contacts are provided by residues 26 to 27 (GN), 43 to 44 (SG), and 72 to 73 (SS). Zn(2+)-binding residues include D74, H93, and H95. D118 serves as the catalytic Proton donor/acceptor. A Zn(2+)-binding site is contributed by H167. The active-site Proton donor/acceptor is the Y225.

The protein belongs to the aldolase class II family. AraD/FucA subfamily. Zn(2+) is required as a cofactor.

The enzyme catalyses L-ribulose 5-phosphate = D-xylulose 5-phosphate. It functions in the pathway cofactor degradation; L-ascorbate degradation; D-xylulose 5-phosphate from L-ascorbate: step 4/4. Its function is as follows. Catalyzes the isomerization of L-ribulose 5-phosphate to D-xylulose 5-phosphate. Is involved in the anaerobic L-ascorbate utilization. The protein is L-ribulose-5-phosphate 4-epimerase UlaF of Escherichia fergusonii (strain ATCC 35469 / DSM 13698 / CCUG 18766 / IAM 14443 / JCM 21226 / LMG 7866 / NBRC 102419 / NCTC 12128 / CDC 0568-73).